The following is a 598-amino-acid chain: Elongation factor 4 (598 aa).

In terms of domain architecture, tr-type G spans 4–181 (SKIRNFSIIA…AVIEKIPAPK (178 aa)). GTP is bound by residues 16-21 (DHGKST) and 128-131 (NKID).

The protein belongs to the TRAFAC class translation factor GTPase superfamily. Classic translation factor GTPase family. LepA subfamily.

It localises to the cell membrane. It catalyses the reaction GTP + H2O = GDP + phosphate + H(+). Its function is as follows. Required for accurate and efficient protein synthesis under certain stress conditions. May act as a fidelity factor of the translation reaction, by catalyzing a one-codon backward translocation of tRNAs on improperly translocated ribosomes. Back-translocation proceeds from a post-translocation (POST) complex to a pre-translocation (PRE) complex, thus giving elongation factor G a second chance to translocate the tRNAs correctly. Binds to ribosomes in a GTP-dependent manner. The protein is Elongation factor 4 of Mycoplasma mobile (strain ATCC 43663 / 163K / NCTC 11711) (Mesomycoplasma mobile).